Consider the following 206-residue polypeptide: LexA repressor (206 aa).

The segment at residues 28-48 (RAEIATRLGFKSANAAEEHLK) is a DNA-binding region (H-T-H motif). Catalysis depends on for autocatalytic cleavage activity residues S123 and K160.

The protein belongs to the peptidase S24 family. In terms of assembly, homodimer.

The catalysed reaction is Hydrolysis of Ala-|-Gly bond in repressor LexA.. Functionally, represses a number of genes involved in the response to DNA damage (SOS response), including recA and lexA. In the presence of single-stranded DNA, RecA interacts with LexA causing an autocatalytic cleavage which disrupts the DNA-binding part of LexA, leading to derepression of the SOS regulon and eventually DNA repair. The sequence is that of LexA repressor from Shewanella sp. (strain ANA-3).